The following is a 998-amino-acid chain: SEC23-interacting protein (998 aa).

The interaction with SEC23A stretch occupies residues 1–363 (MADRKANGGG…YTEEFSEKLE (363 aa)). Residues 50 to 246 (LPGEDSTDVG…AQQQVPARPA (197 aa)) are disordered. The span at 54–63 (DSTDVGEEDS) shows a compositional bias: acidic residues. The segment covering 65-78 (LGQTSTHTSTPQTF) has biased composition (polar residues). The segment covering 79–88 (SYFSQVSSSS) has biased composition (low complexity). 3 stretches are compositionally biased toward polar residues: residues 94–108 (IGQSPLTTSAMSAGQ), 143–158 (PPSQMGTSTYSPSQPS), and 232–241 (AMQSPAQQQV). Phosphoserine is present on Ser-600. The SAM domain occupies 640–703 (EEPLTLHGTL…NFVKLKAAKL (64 aa)). Residues 720–742 (TKGQDESAPKTKEMASPSSESNE) form a disordered region. A compositionally biased stretch (basic and acidic residues) spans 722–732 (GQDESAPKTKE). Phosphoserine occurs at positions 735, 748, and 924. Residues 777–987 (LDFEPEIFFA…ALLLLKEIYR (211 aa)) enclose the DDHD domain.

The protein belongs to the PA-PLA1 family. In terms of assembly, interacts with SEC23A.

Its subcellular location is the cytoplasmic vesicle. It localises to the COPII-coated vesicle membrane. It is found in the endoplasmic reticulum. Its function is as follows. Plays a role in the organization of endoplasmic reticulum exit sites. Specifically binds to phosphatidylinositol 3-phosphate (PI(3)P), phosphatidylinositol 4-phosphate (PI(4)P) and phosphatidylinositol 5-phosphate (PI(5)P). This Mus musculus (Mouse) protein is SEC23-interacting protein (Sec23ip).